Reading from the N-terminus, the 303-residue chain is Pseudouridine-5'-phosphate glycosidase (303 aa).

Catalysis depends on glutamate 26, which acts as the Proton donor. Lysine 87 and valine 107 together coordinate substrate. Position 139 (aspartate 139) interacts with Mn(2+). 141–143 (SAD) lines the substrate pocket. Catalysis depends on lysine 160, which acts as the Nucleophile.

Belongs to the pseudouridine-5'-phosphate glycosidase family. As to quaternary structure, homotrimer. Mn(2+) serves as cofactor.

The enzyme catalyses D-ribose 5-phosphate + uracil = psi-UMP + H2O. Catalyzes the reversible cleavage of pseudouridine 5'-phosphate (PsiMP) to ribose 5-phosphate and uracil. Functions biologically in the cleavage direction, as part of a pseudouridine degradation pathway. The chain is Pseudouridine-5'-phosphate glycosidase from Saccharopolyspora erythraea (strain ATCC 11635 / DSM 40517 / JCM 4748 / NBRC 13426 / NCIMB 8594 / NRRL 2338).